The chain runs to 328 residues: Complex I intermediate-associated protein 30, mitochondrial (328 aa).

The transit peptide at Met1 to Leu24 directs the protein to the mitochondrion. Residues Val44–Gly54 are compositionally biased toward polar residues. The disordered stretch occupies residues Val44–Glu80. Residues Lys55 to Ala69 show a composition bias toward basic and acidic residues. A Phosphoserine modification is found at Ser319.

The protein belongs to the CIA30 family. In terms of assembly, part of the mitochondrial complex I assembly/MCIA complex that comprises at least the core subunits TMEM126B, NDUFAF1, ECSIT and ACAD9 and complement subunits such as COA1 and TMEM186. Interacts with ECSIT. Interacts with ACAD9. At early stages of complex I assembly, it is found in intermediate subcomplexes that contain different subunits including NDUFB6, NDUFA6, NDUFA9, NDUFS3, NDUFS7, ND1, ND2 and ND3. Interacts with TMEM70 and TMEM242.

It localises to the mitochondrion. The protein resides in the mitochondrion matrix. In terms of biological role, as part of the MCIA complex, involved in the assembly of the mitochondrial complex I. This chain is Complex I intermediate-associated protein 30, mitochondrial, found in Mus musculus (Mouse).